We begin with the raw amino-acid sequence, 786 residues long: MNEKILKTLEYDKIQQALLGQVVTANGRQLVQAMQPLTDPVAVQQALDETADGASALRLKGGIPVPQLENIDPALKRVDIGAVLNGQELASISRVLQTVSAIDKFLTDLQDQIDFRQLYTLQESLTVLPQLSRRLKTAVDPDGTLTDEASPQLHGVREQIKSIEGKIRGKMTNYTRGAQSKYLSDPIVTIRDDRYVIPVKAEYRAKFGGVVHDQSATGQTLFIEPQVIVALNNRLREAQLAEVAEINRILAELSNELAPYTGQIKANAAVLGHFDFINAKARLAKAEKATEPLVSADNDVLLRDARHPLIDPHKVVGNDIPLGDKYQAMVITGPNTGGKTITLKTLGLLQLMGQSGLFIPADDESRIGIFDEVFADIGDEQSIEQNLSTFSAHMDNIVHILKQLSQNSLVLFDELGAGTDPQEGAALAIAILDAVGEVGAYVVATTHYPELKLYGYNTAKTINASMEFDSKTLQPTYRLLVGVPGRSNAFDISARLGLPSVIVERAKSMISSDSHELNNMISDLEKQRKAAETAYEAARRQLADAQSVHDELAAAYKKFTTERDAQLQQAKDKANSLVDKAQTKADKIIKQLRQMQLTNPGTVKENQLIAAKTALKQLHQDEPLQKNRILRREREKQALHVGDEVKVASYDQTGTLLEQFDKKHWQVQLGILKMKVPTDEMEKIKPSKQSAAQRPVVKVSGGGMSGPSTTLDLRGERYDQAMADLDQYIDAALLAGYPSVTIIHGLGTGAIRNGVTQYLKRNRQVKTYGFAPQNAGGSGATIVNFK.

333 to 340 (GPNTGGKT) serves as a coordination point for ATP. Residues 682–709 (EKIKPSKQSAAQRPVVKVSGGGMSGPST) form a disordered region. Residues 711-786 (LDLRGERYDQ…GSGATIVNFK (76 aa)) enclose the Smr domain.

The protein belongs to the DNA mismatch repair MutS family. MutS2 subfamily. In terms of assembly, homodimer. Binds to stalled ribosomes, contacting rRNA.

In terms of biological role, endonuclease that is involved in the suppression of homologous recombination and thus may have a key role in the control of bacterial genetic diversity. Acts as a ribosome collision sensor, splitting the ribosome into its 2 subunits. Detects stalled/collided 70S ribosomes which it binds and splits by an ATP-hydrolysis driven conformational change. Acts upstream of the ribosome quality control system (RQC), a ribosome-associated complex that mediates the extraction of incompletely synthesized nascent chains from stalled ribosomes and their subsequent degradation. Probably generates substrates for RQC. The chain is Endonuclease MutS2 from Lacticaseibacillus casei (strain BL23) (Lactobacillus casei).